The chain runs to 108 residues: Movement protein (108 aa).

The interval 1-25 (MDASSQYSALPYPQPPRVPSAAPSA) is disordered. A helical membrane pass occupies residues 35–55 (EIVIFTFVSVLALYLLWLWVL). A disordered region spans residues 73–108 (LIFGPGERPPVASADGSRPVPDPSPPVRRDLDLSRV). Basic and acidic residues predominate over residues 99–108 (VRRDLDLSRV).

This sequence belongs to the mastrevirus movement protein family. Interacts with the capsid protein (CP). Part of a MP-CP-viral DNA complex.

It localises to the host membrane. Functionally, involved in the viral transport within, and between cells. The protein is Movement protein of Megathyrsus maximus (PanSV).